The sequence spans 718 residues: Polyribonucleotide nucleotidyltransferase (718 aa).

Mg(2+) is bound by residues Asp497 and Asp503. A KH domain is found at 564–623 (PRLLTMRIDPDMIGLVIGPGGKTVKSITEQTKTKIDIDDDGTVTISASEAEQAERAKQLI). In terms of domain architecture, S1 motif spans 633 to 701 (GEVYVGRVTR…NKGRLNLTRL (69 aa)).

Belongs to the polyribonucleotide nucleotidyltransferase family. Requires Mg(2+) as cofactor.

The protein localises to the cytoplasm. It catalyses the reaction RNA(n+1) + phosphate = RNA(n) + a ribonucleoside 5'-diphosphate. Functionally, involved in mRNA degradation. Catalyzes the phosphorolysis of single-stranded polyribonucleotides processively in the 3'- to 5'-direction. In Gloeothece citriformis (strain PCC 7424) (Cyanothece sp. (strain PCC 7424)), this protein is Polyribonucleotide nucleotidyltransferase.